The primary structure comprises 453 residues: MEASLLKKNQSVELTIEDLTHDGSGVGKIDGYPLFIPNALPGEKITAKITKLNKNYGFARMENIEVVSAERVEPPCAVYSKCGGCSLQHLSYDGQLAFKRNQVEETMKRIGKLNVEVPDTLGMENPWRYRNKSQVPVGFVNGKLTAGFYQKRSHDIIDMSTCLIHNEKGDVAVQKTREILAKYGTEPYDEKTGKGDIRHIMTRFAHTTGQLMIVLVTTKERLPFKAEIIQDLTNQLEVTSIVQNINPQKTNVIFGDRTKTLWGSDIIEDTIHGIRFAISARSFYQVNPLQTEVLYQQAIDSAELTGEETVIDAYCGIGSISLCLAKKAKHVYGVEIVDQAIQDARANAELNNLTNTTFETGKAEEVIPQWYKNGIVADVLVVDPPRKGCDETLLETILAMKPKKVVYVSCNPGTLARDMKILTEGGYEAKKVQPVDMFPMTTHIEAVTVLTLK.

Positions 5–63 constitute a TRAM domain; that stretch reads LLKKNQSVELTIEDLTHDGSGVGKIDGYPLFIPNALPGEKITAKITKLNKNYGFARMEN. Residues Cys-76, Cys-82, Cys-85, and Cys-162 each coordinate [4Fe-4S] cluster. Positions 285, 314, 335, and 383 each coordinate S-adenosyl-L-methionine. Cys-410 (nucleophile) is an active-site residue.

Belongs to the class I-like SAM-binding methyltransferase superfamily. RNA M5U methyltransferase family.

This is an uncharacterized protein from Listeria innocua serovar 6a (strain ATCC BAA-680 / CLIP 11262).